The chain runs to 356 residues: Phospho-N-acetylmuramoyl-pentapeptide-transferase (356 aa).

The next 10 helical transmembrane spans lie at 25–45 (TVAAMLTSGLIVFLFGPSIIA), 70–90 (GTPTMGGLMILTGIVVSAFLW), 93–113 (LSNIYFWVSLFVMLSFGMIGF), 138–158 (FLIAIIAAFVLLQVGSSGLAL), 164–184 (YFINLSWFFLPFSAFVIVGTG), 195–215 (GLAIVPVMVAALSFALIAYLS), 235–255 (LAVLLGAVVGAGLGFLWFNAP), 258–278 (AIFMGDTGSLALGGLLGIVAV), 284–304 (IVLALIGGLFVLEGFSVVIQV), and 333–353 (QVVIRFWIISIVLALVGLSTL).

This sequence belongs to the glycosyltransferase 4 family. MraY subfamily. Mg(2+) is required as a cofactor.

It localises to the cell inner membrane. The catalysed reaction is UDP-N-acetyl-alpha-D-muramoyl-L-alanyl-gamma-D-glutamyl-meso-2,6-diaminopimeloyl-D-alanyl-D-alanine + di-trans,octa-cis-undecaprenyl phosphate = di-trans,octa-cis-undecaprenyl diphospho-N-acetyl-alpha-D-muramoyl-L-alanyl-D-glutamyl-meso-2,6-diaminopimeloyl-D-alanyl-D-alanine + UMP. Its pathway is cell wall biogenesis; peptidoglycan biosynthesis. Catalyzes the initial step of the lipid cycle reactions in the biosynthesis of the cell wall peptidoglycan: transfers peptidoglycan precursor phospho-MurNAc-pentapeptide from UDP-MurNAc-pentapeptide onto the lipid carrier undecaprenyl phosphate, yielding undecaprenyl-pyrophosphoryl-MurNAc-pentapeptide, known as lipid I. The protein is Phospho-N-acetylmuramoyl-pentapeptide-transferase of Bartonella quintana (strain Toulouse) (Rochalimaea quintana).